The primary structure comprises 558 residues: Serine palmitoyltransferase 1 (558 aa).

The Lumenal segment spans residues 1 to 49 (MAHIPEVLPKSIPIPAFIVTTSSYLWYYFNLVLTQIPGGQFIVSYIKKS). The chain crosses the membrane as a helical span at residues 50-84 (HHDDPYRTTVEIGLILYGIIYYLSKPQQKKSLQAQ). The Cytoplasmic segment spans residues 85–341 (KPNLSPQEID…GRGLSEHFNM (257 aa)). T121 carries the post-translational modification Phosphothreonine. The chain crosses the membrane as a helical span at residues 342 to 371 (DRATAIDITVGSMATALGSTGGFVLGDSVM). The Lumenal segment spans residues 372–424 (CLHQRIGSNAYCFSACLPAYTVTSVSKVLKLMDSNNDAVQTLQKLSKSLHDSF). Residues 425–457 (ASDDSLRSYVIVTSSPVSAVLHLQLTPAYRSRK) traverse the membrane as a helical segment. Residues 458-558 (FGYTCEQLFE…ILACCQESNK (101 aa)) are Cytoplasmic-facing.

Belongs to the class-II pyridoxal-phosphate-dependent aminotransferase family. LCB1 and LCB2 encode essential subunits of the enzyme and form a heterodimer. Component of the SPOTS complex, at least composed of LCB1/2 (LCB1 and/or LCB2), ORM1/2 (ORM1 and/or ORM2), SAC1 and TSC3. Interacts with LCB2 and TSC3. Requires pyridoxal 5'-phosphate as cofactor.

The protein resides in the cytoplasm. The protein localises to the endoplasmic reticulum membrane. It catalyses the reaction L-serine + hexadecanoyl-CoA + H(+) = 3-oxosphinganine + CO2 + CoA. The protein operates within lipid metabolism; sphingolipid metabolism. Its function is as follows. Component of serine palmitoyltransferase (SPT), which catalyzes the committed step in the synthesis of sphingolipids, the condensation of serine with palmitoyl CoA to form the long chain base 3-ketosphinganine. This chain is Serine palmitoyltransferase 1 (LCB1), found in Saccharomyces cerevisiae (strain ATCC 204508 / S288c) (Baker's yeast).